We begin with the raw amino-acid sequence, 274 residues long: Shikimate kinase (274 aa).

An ATP-binding site is contributed by 86–96; it reads PVGKGLKSSSA.

It belongs to the GHMP kinase family. Archaeal shikimate kinase subfamily.

It localises to the cytoplasm. It catalyses the reaction shikimate + ATP = 3-phosphoshikimate + ADP + H(+). It participates in metabolic intermediate biosynthesis; chorismate biosynthesis; chorismate from D-erythrose 4-phosphate and phosphoenolpyruvate: step 5/7. This is Shikimate kinase (aroK) from Pyrococcus abyssi (strain GE5 / Orsay).